The following is a 216-amino-acid chain: 3-isopropylmalate dehydratase small subunit (216 aa).

The protein belongs to the LeuD family. LeuD type 1 subfamily. Heterodimer of LeuC and LeuD.

The catalysed reaction is (2R,3S)-3-isopropylmalate = (2S)-2-isopropylmalate. It participates in amino-acid biosynthesis; L-leucine biosynthesis; L-leucine from 3-methyl-2-oxobutanoate: step 2/4. In terms of biological role, catalyzes the isomerization between 2-isopropylmalate and 3-isopropylmalate, via the formation of 2-isopropylmaleate. The chain is 3-isopropylmalate dehydratase small subunit from Acinetobacter baylyi (strain ATCC 33305 / BD413 / ADP1).